A 347-amino-acid polypeptide reads, in one-letter code: Phenylalanine--tRNA ligase alpha subunit (347 aa).

E265 lines the Mg(2+) pocket.

The protein belongs to the class-II aminoacyl-tRNA synthetase family. Phe-tRNA synthetase alpha subunit type 1 subfamily. In terms of assembly, tetramer of two alpha and two beta subunits. The cofactor is Mg(2+).

Its subcellular location is the cytoplasm. It carries out the reaction tRNA(Phe) + L-phenylalanine + ATP = L-phenylalanyl-tRNA(Phe) + AMP + diphosphate + H(+). This is Phenylalanine--tRNA ligase alpha subunit from Mycolicibacterium paratuberculosis (strain ATCC BAA-968 / K-10) (Mycobacterium paratuberculosis).